Reading from the N-terminus, the 349-residue chain is N-lysine methyltransferase KMT5A (349 aa).

The interval 18 to 46 (AAVAATAPGPEMVEQRGPGRPRSDGENVF) is disordered. Residue serine 57 is modified to Phosphoserine. Residues 65 to 207 (RSPLQEENSV…SEERKKNELI (143 aa)) form a disordered region. The span at 107–119 (VKSDEQKSKDTRR) shows a compositional bias: basic and acidic residues. Threonine 138 carries the phosphothreonine modification. A compositionally biased stretch (basic residues) spans 154–170 (ALKKSLKGKQAPRKKSQ). Residues 192 to 207 (SKAELQSEERKKNELI) show a composition bias toward basic and acidic residues. Residues 213 to 334 (EGMKIDLIDG…AGEELLYDYG (122 aa)) enclose the SET domain. S-adenosyl-L-methionine is bound by residues 223–225 (KGR), tyrosine 268, and 295–296 (NH).

This sequence belongs to the class V-like SAM-binding methyltransferase superfamily. Histone-lysine methyltransferase family. PR/SET subfamily. As to quaternary structure, interacts with L3MBTL1. Interacts with SIRT2 (phosphorylated form); the interaction is direct, stimulates KMT5A-mediated methyltransferase activity at histone H4 'Lys-20' (H4K20me1) and is increased in a H(2)O(2)-induced oxidative stress-dependent manner. Post-translationally, ubiquitinated and degraded by the DCX(DTL) complex.

The protein localises to the nucleus. It is found in the chromosome. The catalysed reaction is L-lysyl(20)-[histone H4] + S-adenosyl-L-methionine = N(6)-methyl-L-lysyl(20)-[histone H4] + S-adenosyl-L-homocysteine + H(+). It catalyses the reaction L-lysyl-[protein] + S-adenosyl-L-methionine = N(6)-methyl-L-lysyl-[protein] + S-adenosyl-L-homocysteine + H(+). In terms of biological role, protein-lysine N-methyltransferase that monomethylates both histones and non-histone proteins. Specifically monomethylates 'Lys-20' of histone H4 (H4K20me1). H4K20me1 is enriched during mitosis and represents a specific tag for epigenetic transcriptional repression. Mainly functions in euchromatin regions, thereby playing a central role in the silencing of euchromatic genes. Required for cell proliferation, probably by contributing to the maintenance of proper higher-order structure of DNA during mitosis. Involved in chromosome condensation and proper cytokinesis. Nucleosomes are preferred as substrate compared to free histones. Mediates monomethylation of p53/TP53 at 'Lys-382', leading to repress p53/TP53-target genes. Plays a negative role in TGF-beta response regulation and a positive role in cell migration. The sequence is that of N-lysine methyltransferase KMT5A from Mus musculus (Mouse).